We begin with the raw amino-acid sequence, 62 residues long: Large ribosomal subunit protein uL30 (62 aa).

Belongs to the universal ribosomal protein uL30 family. Part of the 50S ribosomal subunit.

The sequence is that of Large ribosomal subunit protein uL30 from Halalkalibacterium halodurans (strain ATCC BAA-125 / DSM 18197 / FERM 7344 / JCM 9153 / C-125) (Bacillus halodurans).